Here is a 488-residue protein sequence, read N- to C-terminus: Glutamate--tRNA ligase (488 aa).

Positions 16–26 (PSPTGEPHVGT) match the 'HIGH' region motif. The 'KMSKS' region signature appears at 257–261 (KLSKR). Lys260 lines the ATP pocket.

This sequence belongs to the class-I aminoacyl-tRNA synthetase family. Glutamate--tRNA ligase type 1 subfamily. As to quaternary structure, monomer.

It is found in the cytoplasm. It catalyses the reaction tRNA(Glu) + L-glutamate + ATP = L-glutamyl-tRNA(Glu) + AMP + diphosphate. Catalyzes the attachment of glutamate to tRNA(Glu) in a two-step reaction: glutamate is first activated by ATP to form Glu-AMP and then transferred to the acceptor end of tRNA(Glu). The protein is Glutamate--tRNA ligase of Rhizobium johnstonii (strain DSM 114642 / LMG 32736 / 3841) (Rhizobium leguminosarum bv. viciae).